The following is a 283-amino-acid chain: 4-diphosphocytidyl-2-C-methyl-D-erythritol kinase (283 aa).

The active site involves Lys-10. 99–109 provides a ligand contact to ATP; it reads PMGGGLGGGSS. Asp-141 is an active-site residue.

This sequence belongs to the GHMP kinase family. IspE subfamily. Homodimer.

The catalysed reaction is 4-CDP-2-C-methyl-D-erythritol + ATP = 4-CDP-2-C-methyl-D-erythritol 2-phosphate + ADP + H(+). Its pathway is isoprenoid biosynthesis; isopentenyl diphosphate biosynthesis via DXP pathway; isopentenyl diphosphate from 1-deoxy-D-xylulose 5-phosphate: step 3/6. In terms of biological role, catalyzes the phosphorylation of the position 2 hydroxy group of 4-diphosphocytidyl-2C-methyl-D-erythritol. The sequence is that of 4-diphosphocytidyl-2-C-methyl-D-erythritol kinase from Salmonella choleraesuis (strain SC-B67).